Consider the following 470-residue polypeptide: ESX-4 secretion system ATPase EccB4 (470 aa).

Residues L44–L64 form a helical membrane-spanning segment.

Belongs to the EccB family. In terms of assembly, part of the ESX-4 / type VII secretion system (T7SS), which is composed of cytosolic and membrane components.

The protein localises to the cell membrane. Its function is as follows. An ATPase. This is ESX-4 secretion system ATPase EccB4 (eccB4) from Mycobacterium tuberculosis (strain CDC 1551 / Oshkosh).